The sequence spans 337 residues: Large ribosomal subunit protein uL3 (337 aa).

The segment at 1 to 20 (MASIHRPKRGSLAFSPRKRA) is disordered.

This sequence belongs to the universal ribosomal protein uL3 family. Part of the 50S ribosomal subunit. Forms a cluster with proteins L14 and L24e.

Functionally, one of the primary rRNA binding proteins, it binds directly near the 3'-end of the 23S rRNA, where it nucleates assembly of the 50S subunit. The sequence is that of Large ribosomal subunit protein uL3 from Methanosarcina barkeri (strain Fusaro / DSM 804).